The following is a 540-amino-acid chain: FAD-binding monooxygenase lolF1 (540 aa).

FAD is bound by residues valine 43 to glutamate 46 and aspartate 55 to phenylalanine 58. NADP(+)-binding positions include alanine 53 to aspartate 55, threonine 182 to glutamine 188, and glutamine 205 to serine 206.

The protein belongs to the FAD-binding monooxygenase family. The cofactor is FAD.

It functions in the pathway alkaloid biosynthesis. Its function is as follows. FAD-binding monooxygenase; part of the gene cluster that mediates the biosynthesis of loline alkaloids, potent insecticidal agents composed of a pyrrolizidine ring system and an uncommon ether bridge linking carbons 2 and 7. Lolines are structurally differentiated by the various modifications of the L-amino group and include norloline, loline, N-methylloline, N-acetylloline, N-acetylnorloline, and N-formylloline. The first committed step is the condensation of O-acetyl-L-homoserine (derived from L-aspartic acid) and L-proline, probably catalyzed by the gamma-type pyridoxal 5'-phosphate(PLP)-dependent enzyme lolC, to give the diamino diacid, NACPP. Ensuing cyclization, decarboxylation, and acetylation steps yield 1-exo-acetamidopyrrolizidine (AcAP). LolO is required for installation of the ether bridge upon the pathway intermediate, 1-exo-acetamidopyrrolizidine (AcAP). In sequential 2-oxoglutarate- and O(2)-consuming steps, lolO removes hydrogens from C2 and C7 of AcAP to form both carbon-oxygen bonds in N-acetylnorloline (NANL), the precursor to all other lolines. The enzymes lolD, lolE, lolF and lolT have also been proposed to be involved in the ether-bridge installation. Further processing of the exocyclic moiety of NANL by fungal N-acetamidase (LolN), methyltransferase (LolM), and cytochrome P450 (LolP) enzymes, with occasional involvement of a plant acetyltransferase, generates the other known lolines. LolN transforms NANL to norlonine which is monomethylated and dimethylated to respectively lonine and N-methyllonine (NML) by lolM. LolP catalyzes hydroxylation of the methyl group in N-methylloline (NML) and further oxygenation to N-formylloline (NFL). A plant acetyltransferase is responsible for the acetylation of loline to form N-acetylloline (NAL). LolA might interact with aspartate kinase to prevent feedback inhibition of its activity by these end products and thereby promote production of L-homoserine from L-aspartate. This is FAD-binding monooxygenase lolF1 from Epichloe uncinata (Endophyte fungus).